The sequence spans 1021 residues: Phytosulfokine receptor 1 (1021 aa).

Residues 1 to 24 (MGVLRVYVILILVGFCVQIVVVNS) form the signal peptide. One copy of the LRR 1 repeat lies at 21–43 (VVNSQNLTCNSNDLKALEGFMRG). 3 N-linked (GlcNAc...) asparagine glycosylation sites follow: Asn26, Asn54, and Asn83. LRR repeat units lie at residues 85–109 (SGRV…VAKL), 110–133 (DQLK…LLNL), 135–156 (NLEV…LINL), 158–180 (SLRV…LCNN), 181–205 (LPRI…IGNC), 206–229 (SSVE…LFQL), 231–252 (NLSV…KLGK), 253–277 (LSNL…FLEL), 301–325 (SRSI…CSAM), 326–349 (TNLT…LPNC), 351–372 (RLKT…SFKN), 373–397 (FQSL…EILQ), 402–426 (LKTL…QFKN), 428–448 (KVLI…LSNS), 449–474 (PSLQ…SLNS), and 476–496 (FYLD…LTSL). N-linked (GlcNAc...) asparagine glycans are attached at residues Asn116 and Asn132. N-linked (GlcNAc...) asparagine glycans are attached at residues Asn204, Asn217, and Asn231. N-linked (GlcNAc...) asparagine glycosylation is found at Asn311, Asn321, and Asn327. Residues Asn383 and Asn388 are each glycosylated (N-linked (GlcNAc...) asparagine). 5 N-linked (GlcNAc...) asparagine glycosylation sites follow: Asn482, Asn546, Asn568, Asn576, and Asn592. One copy of the LRR 18; atypical repeat lies at 498–555 (SLVSKENAVEEPSPDFPFFKKKNTNAGGLQYNQPSSFPPMIDLSYNSLNGSIWPEFGD). LRR repeat units lie at residues 556–580 (LRQL…LSGM), 581–604 (TSLE…LVKL), and 606–629 (FLST…QFQT). The N-linked (GlcNAc...) asparagine glycan is linked to Asn632. The helical transmembrane segment at 673-693 (VAVGTGLGTVFLLTVTLLIIL) threads the bilayer. The Protein kinase domain occupies 743 to 1014 (FNQANIIGCG…PTTQQLVSWL (272 aa)). Residues 749-757 (IGCGGFGLV) and Lys771 each bind ATP. Asp869 functions as the Proton acceptor in the catalytic mechanism.

This sequence belongs to the protein kinase superfamily. Ser/Thr protein kinase family. N-glycosylated. As to expression, expressed ubiquitously in leaf, apical meristem, hypocotyl and root.

Its subcellular location is the cell membrane. The enzyme catalyses L-seryl-[protein] + ATP = O-phospho-L-seryl-[protein] + ADP + H(+). The catalysed reaction is L-threonyl-[protein] + ATP = O-phospho-L-threonyl-[protein] + ADP + H(+). Phytosulfokine receptor with a serine/threonine-protein kinase activity. Regulates, in response to phytosulfokine binding, a signaling cascade involved in plant cell differentiation, organogenesis and somatic embryogenesis. The sequence is that of Phytosulfokine receptor 1 (PSKR) from Daucus carota (Wild carrot).